Here is a 150-residue protein sequence, read N- to C-terminus: UPF0735 ACT domain-containing protein Csac_0995 (150 aa).

In terms of domain architecture, ACT spans 72–147; the sequence is TLALVLQDVP…GVKKIEILGR (76 aa).

The protein belongs to the UPF0735 family.

This chain is UPF0735 ACT domain-containing protein Csac_0995, found in Caldicellulosiruptor saccharolyticus (strain ATCC 43494 / DSM 8903 / Tp8T 6331).